A 302-amino-acid chain; its full sequence is 3-methyl-2-oxobutanoate hydroxymethyltransferase 1 (302 aa).

Mg(2+) is bound by residues aspartate 75 and aspartate 118. 3-methyl-2-oxobutanoate contacts are provided by residues 75 to 76 (DS), aspartate 118, and lysine 147. Glutamate 149 is a Mg(2+) binding site. The active-site Proton acceptor is the glutamate 217.

The protein belongs to the PanB family. In terms of assembly, homodecamer; pentamer of dimers. Mg(2+) is required as a cofactor.

Its subcellular location is the cytoplasm. The catalysed reaction is 3-methyl-2-oxobutanoate + (6R)-5,10-methylene-5,6,7,8-tetrahydrofolate + H2O = 2-dehydropantoate + (6S)-5,6,7,8-tetrahydrofolate. It participates in cofactor biosynthesis; (R)-pantothenate biosynthesis; (R)-pantoate from 3-methyl-2-oxobutanoate: step 1/2. Catalyzes the reversible reaction in which hydroxymethyl group from 5,10-methylenetetrahydrofolate is transferred onto alpha-ketoisovalerate to form ketopantoate. This is 3-methyl-2-oxobutanoate hydroxymethyltransferase 1 from Zymomonas mobilis subsp. mobilis (strain ATCC 31821 / ZM4 / CP4).